The chain runs to 141 residues: Large ribosomal subunit protein uL16 (141 aa).

Belongs to the universal ribosomal protein uL16 family. Part of the 50S ribosomal subunit.

Functionally, binds 23S rRNA and is also seen to make contacts with the A and possibly P site tRNAs. This is Large ribosomal subunit protein uL16 from Campylobacter hominis (strain ATCC BAA-381 / DSM 21671 / CCUG 45161 / LMG 19568 / NCTC 13146 / CH001A).